A 305-amino-acid chain; its full sequence is Energy-coupling factor transporter ATP-binding protein EcfA2 (305 aa).

The ABC transporter domain occupies 13–262 (LQNVDITFTN…KNLLQELLIE (250 aa)). Residue 55-62 (GSTGSGKS) participates in ATP binding.

The protein belongs to the ABC transporter superfamily. Energy-coupling factor EcfA family. As to quaternary structure, forms a stable energy-coupling factor (ECF) transporter complex composed of 2 membrane-embedded substrate-binding proteins (S component), 2 ATP-binding proteins (A component) and 2 transmembrane proteins (T component).

Its subcellular location is the cell membrane. Functionally, ATP-binding (A) component of a common energy-coupling factor (ECF) ABC-transporter complex. Unlike classic ABC transporters this ECF transporter provides the energy necessary to transport a number of different substrates. The protein is Energy-coupling factor transporter ATP-binding protein EcfA2 of Spiroplasma kunkelii.